A 453-amino-acid chain; its full sequence is Phenolic glucoside malonyltransferase 1 (453 aa).

The Proton acceptor role is filled by His165. Positions 165-169 (HVAGD) match the HXXXD motif motif. Malonyl-CoA is bound by residues Lys254, His266, and 268-269 (TS). Residue Asp394 is the Proton acceptor of the active site. Residues 394 to 398 (DFGWG) carry the DFGWG motif motif.

This sequence belongs to the plant acyltransferase family. Phenolic glucoside malonyltransferase subfamily. Monomer. As to expression, highly expressed in flower. Also expressed in flower bud, stem, root and leaf.

The enzyme catalyses a flavonol 3-O-beta-D-glucoside + malonyl-CoA = a flavonol 3-O-(6-O-malonyl-beta-D-glucoside) + CoA. The catalysed reaction is a flavonol 7-O-beta-D-glucoside + malonyl-CoA = a flavonol 7-O-(6-O-malonyl-beta-D-glucoside) + CoA. Its function is as follows. Malonyltransferase with broad substrate specificity acting on phenolic glucosides including xenobiotic naphthols. Has activity against flavonoid 7-O-glucosides, flavonoid 3-O-glucosides and naphthol glucosides, and to a lesser extent against coumarin glucosides in vitro. Prefers malonyl-CoA as an acyl donor, but also active with succinyl-CoA and methylmalonyl-CoA, but not with acetyl-CoA. The protein is Phenolic glucoside malonyltransferase 1 of Nicotiana tabacum (Common tobacco).